A 643-amino-acid polypeptide reads, in one-letter code: 1-deoxy-D-xylulose-5-phosphate synthase (643 aa).

Thiamine diphosphate-binding positions include His-72 and 113–115 (GHA). Asp-144 lines the Mg(2+) pocket. Thiamine diphosphate is bound by residues 145–146 (GA), Asn-174, Tyr-287, and Glu-370. Asn-174 is a binding site for Mg(2+).

It belongs to the transketolase family. DXPS subfamily. In terms of assembly, homodimer. It depends on Mg(2+) as a cofactor. The cofactor is thiamine diphosphate.

The enzyme catalyses D-glyceraldehyde 3-phosphate + pyruvate + H(+) = 1-deoxy-D-xylulose 5-phosphate + CO2. It participates in metabolic intermediate biosynthesis; 1-deoxy-D-xylulose 5-phosphate biosynthesis; 1-deoxy-D-xylulose 5-phosphate from D-glyceraldehyde 3-phosphate and pyruvate: step 1/1. Its function is as follows. Catalyzes the acyloin condensation reaction between C atoms 2 and 3 of pyruvate and glyceraldehyde 3-phosphate to yield 1-deoxy-D-xylulose-5-phosphate (DXP). This chain is 1-deoxy-D-xylulose-5-phosphate synthase, found in Prochlorococcus marinus (strain SARG / CCMP1375 / SS120).